The sequence spans 227 residues: 2-C-methyl-D-erythritol 4-phosphate cytidylyltransferase (227 aa).

It belongs to the IspD/TarI cytidylyltransferase family. IspD subfamily.

It catalyses the reaction 2-C-methyl-D-erythritol 4-phosphate + CTP + H(+) = 4-CDP-2-C-methyl-D-erythritol + diphosphate. It participates in isoprenoid biosynthesis; isopentenyl diphosphate biosynthesis via DXP pathway; isopentenyl diphosphate from 1-deoxy-D-xylulose 5-phosphate: step 2/6. Its function is as follows. Catalyzes the formation of 4-diphosphocytidyl-2-C-methyl-D-erythritol from CTP and 2-C-methyl-D-erythritol 4-phosphate (MEP). This is 2-C-methyl-D-erythritol 4-phosphate cytidylyltransferase from Lachnospira eligens (strain ATCC 27750 / DSM 3376 / VPI C15-48 / C15-B4) (Eubacterium eligens).